Here is a 120-residue protein sequence, read N- to C-terminus: MKEFQFDTLWAVMQIMLGAFFWPALIVIILTIAAFCYLLIKEKGLVACRLKGSSLVGLLGGILALYLLFSISQASISDIGGPIDLILVVLAYFGGFLASTMLLYSIIGFVKPRSCACQKN.

The next 3 helical transmembrane spans lie at Phe-20–Leu-39, Gly-52–Ile-71, and Ile-86–Gly-108.

The protein resides in the cell membrane. This is an uncharacterized protein from Pasteurella multocida (strain Pm70).